A 200-amino-acid chain; its full sequence is ATP-dependent Clp protease proteolytic subunit 2 (200 aa).

The active-site Nucleophile is the serine 96. The active site involves histidine 121.

This sequence belongs to the peptidase S14 family. As to quaternary structure, fourteen ClpP subunits assemble into 2 heptameric rings which stack back to back to give a disk-like structure with a central cavity, resembling the structure of eukaryotic proteasomes.

The protein localises to the cytoplasm. The enzyme catalyses Hydrolysis of proteins to small peptides in the presence of ATP and magnesium. alpha-casein is the usual test substrate. In the absence of ATP, only oligopeptides shorter than five residues are hydrolyzed (such as succinyl-Leu-Tyr-|-NHMec, and Leu-Tyr-Leu-|-Tyr-Trp, in which cleavage of the -Tyr-|-Leu- and -Tyr-|-Trp bonds also occurs).. Cleaves peptides in various proteins in a process that requires ATP hydrolysis. Has a chymotrypsin-like activity. Plays a major role in the degradation of misfolded proteins. This Synechococcus sp. (strain JA-2-3B'a(2-13)) (Cyanobacteria bacterium Yellowstone B-Prime) protein is ATP-dependent Clp protease proteolytic subunit 2.